The chain runs to 189 residues: GMP synthase [glutamine-hydrolyzing] subunit A (189 aa).

The Glutamine amidotransferase type-1 domain occupies 1–189 (MIVILNNGGQ…CKKCGFEFEE (189 aa)). Residue cysteine 76 is the Nucleophile of the active site. Residues histidine 163 and glutamate 165 contribute to the active site.

Heterodimer composed of a glutamine amidotransferase subunit (A) and a GMP-binding subunit (B).

The enzyme catalyses XMP + L-glutamine + ATP + H2O = GMP + L-glutamate + AMP + diphosphate + 2 H(+). It participates in purine metabolism; GMP biosynthesis; GMP from XMP (L-Gln route): step 1/1. Functionally, catalyzes the synthesis of GMP from XMP. This Methanococcus maripaludis (strain C6 / ATCC BAA-1332) protein is GMP synthase [glutamine-hydrolyzing] subunit A.